The sequence spans 356 residues: Probable dual-specificity RNA methyltransferase RlmN (356 aa).

The Proton acceptor role is filled by E100. Residues T106–D340 enclose the Radical SAM core domain. A disulfide bond links C113 and C345. [4Fe-4S] cluster contacts are provided by C120, C124, and C127. S-adenosyl-L-methionine is bound by residues G167–E168, S197, S226–H228, and N302. C345 (S-methylcysteine intermediate) is an active-site residue.

It belongs to the radical SAM superfamily. RlmN family. [4Fe-4S] cluster serves as cofactor.

The protein localises to the cytoplasm. It catalyses the reaction adenosine(2503) in 23S rRNA + 2 reduced [2Fe-2S]-[ferredoxin] + 2 S-adenosyl-L-methionine = 2-methyladenosine(2503) in 23S rRNA + 5'-deoxyadenosine + L-methionine + 2 oxidized [2Fe-2S]-[ferredoxin] + S-adenosyl-L-homocysteine. It carries out the reaction adenosine(37) in tRNA + 2 reduced [2Fe-2S]-[ferredoxin] + 2 S-adenosyl-L-methionine = 2-methyladenosine(37) in tRNA + 5'-deoxyadenosine + L-methionine + 2 oxidized [2Fe-2S]-[ferredoxin] + S-adenosyl-L-homocysteine. Specifically methylates position 2 of adenine 2503 in 23S rRNA and position 2 of adenine 37 in tRNAs. The sequence is that of Probable dual-specificity RNA methyltransferase RlmN from Prochlorococcus marinus (strain MIT 9211).